The chain runs to 352 residues: Histidinol-phosphate aminotransferase (352 aa).

Lys-221 carries the N6-(pyridoxal phosphate)lysine modification.

This sequence belongs to the class-II pyridoxal-phosphate-dependent aminotransferase family. Histidinol-phosphate aminotransferase subfamily. Homodimer. Pyridoxal 5'-phosphate serves as cofactor.

The catalysed reaction is L-histidinol phosphate + 2-oxoglutarate = 3-(imidazol-4-yl)-2-oxopropyl phosphate + L-glutamate. The protein operates within amino-acid biosynthesis; L-histidine biosynthesis; L-histidine from 5-phospho-alpha-D-ribose 1-diphosphate: step 7/9. This is Histidinol-phosphate aminotransferase from Staphylococcus aureus (strain MSSA476).